We begin with the raw amino-acid sequence, 105 residues long: uncharacterized protein (105 aa).

2 consecutive transmembrane segments (helical) span residues 10–30 and 48–68; these read YVVFIISLIVLLIIFYVFKIG and YPLAISLVIWVIWYFLLYPPS.

It localises to the membrane. This is an uncharacterized protein from Acanthamoeba polyphaga mimivirus (APMV).